A 1379-amino-acid chain; its full sequence is ABC multidrug transporter MDR2 (1379 aa).

Residues 65 to 85 (IALIVIGTIAGIGAGIPFPLL) traverse the membrane as a helical segment. One can recognise an ABC transmembrane type-1 1 domain in the interval 69–367 (VIGTIAGIGA…MAPFMHIFAS (299 aa)). The N-linked (GlcNAc...) asparagine glycan is linked to asparagine 97. 5 helical membrane passes run 119-139 (VLQV…HTGC), 193-213 (KVGL…VAFL), 215-235 (VATI…MAFG), 301-321 (IQFG…FWQG), and 336-356 (VSVG…FVLS). One can recognise an ABC transporter 1 domain in the interval 403 to 682 (IELQDVTFNY…DGVYAGMVRL (280 aa)). Residue 438 to 445 (GTSGSGKS) coordinates ATP. Asparagine 552 and asparagine 633 each carry an N-linked (GlcNAc...) asparagine glycan. A disordered region spans residues 738–758 (YMPEEADSLPTEPENEKEKPK). 4 helical membrane-spanning segments follow: residues 781 to 801 (LGLI…VIFG), 820 to 840 (GMLF…AVIV), 881 to 901 (LLVA…GTTI), and 920 to 942 (VIAW…SGVL). The ABC transmembrane type-1 2 domain maps to 781 to 1068 (LGLITSIMIG…MFALVPDISK (288 aa)). An N-linked (GlcNAc...) asparagine glycan is attached at asparagine 989. Transmembrane regions (helical) follow at residues 1008-1028 (FWLS…YWWG) and 1032-1052 (ILAG…LLFS). The region spanning 1135–1374 (VQFRNVHFRY…CESYRANVIH (240 aa)) is the ABC transporter 2 domain. Position 1170–1177 (1170–1177 (GPSGSGKS)) interacts with ATP.

The protein belongs to the ABC transporter superfamily. ABCB family. Multidrug resistance exporter (TC 3.A.1.201) subfamily.

The protein resides in the cell membrane. Pleiotropic ABC efflux transporter that may be involved in the modulation susceptibility to a wide range of unrelated cytotoxic compounds. The protein is ABC multidrug transporter MDR2 of Trichophyton interdigitale (strain MR816).